Reading from the N-terminus, the 98-residue chain is Competence protein ComGC (98 aa).

Residues 1-5 (MNEKG) constitute a propeptide that is removed on maturation. The segment at 4–29 (KGFTLVEMLIVLFIISILLLITIPNV) is may be involved in polymerization of ComGC. N-methylphenylalanine is present on Phe-6. Residues 6–26 (FTLVEMLIVLFIISILLLITI) traverse the membrane as a helical segment. A disulfide bond links Cys-41 and Cys-81.

It belongs to the ComGC family. As to quaternary structure, the transformation pili are flexible filaments, consisting mainly of the major pilin ComGC and smaller amounts of the minor pilins, including at least ComGD, ComGF and ComGG. Homodimer. Forms higher-order multimers. Interacts with ComGG; the interaction is probably direct. Post-translationally, processing of ComGC in competent cells requires ComC, while stabilization, possibly by formation of a disulfide bond, requires BdbC and BdbD.

It localises to the cell membrane. Its subcellular location is the cell surface. The protein resides in the fimbrium. In terms of biological role, major component of the type IV-like pilus (T4P) that plays a role in transformation. Transformation pili are dynamically extended and retracted, perhaps thereby promoting DNA uptake and transformation. Required for transformation and DNA binding. This chain is Competence protein ComGC (comGC), found in Bacillus subtilis (strain 168).